The primary structure comprises 606 residues: MILQLPSCLCPILLIVVGSILSGSASGCPQRCDCSPQDRSVLCHRKRYLDVPEGIPTDTRLLDLSKNRIKALNQDEFSAFPYLEELELNENIVSIIEPGAFNGLFNLRSLGLRSNRLKLIPLGVFTGLSNLTQLDISENKIVILLDDMFQDLYNLKSLEVGDNDLVYISHRAFRGLNSLEELTLEKCNLTSVPTEALSHLHGLITLKLRYLNINVIRDYSFKRLYRLKNLEIAHWPYLDTMTSNGLYGLNLTSLSITHSNLSSIPYVAIRHLVYLRFLNLSYNPITAVEGSMLYELLRLQEFHLVGGQLSVVEPYAFRGLNHLKVLNVSSNYLSTLEESSFHSVGNLETLILDKNPLACDCRLLWIFRRRWRLNFSRQQPSCSSPEYVQGKEFKDFPDVLQPNYFTCRRARIQDHSAQVVYVDEGHTVHFFCRADGDPPPTILWQSPRKTFITSKSNGRLTVFPDGTLEVRYAQVQDNGTYHCIASNAGGNDTSLAHLHVRSYSPNWPHKPNKTFAFMSNQPNESDVNSTRASVPFPFDIKTLIIATTMGFISFLGVVLFCLVLLFLWSRGKGNTKHNIEIEYVPRKSDAGLSSADAPRKFNMKMI.

The signal sequence occupies residues M1–G27. Cystine bridges form between C28-C34 and C32-C43. Positions C28–T57 constitute an LRRNT domain. The Extracellular segment spans residues C28–T547. LRR repeat units follow at residues D58 to A79, Y82 to G103, N106 to G127, N130 to D151, N154 to G175, S178 to H199, G202 to R223, N250 to H271, Y274 to E295, R298 to G319, and H322 to S343. N130 carries N-linked (GlcNAc...) asparagine glycosylation. N188 carries an N-linked (GlcNAc...) asparagine glycan. 3 N-linked (GlcNAc...) asparagine glycosylation sites follow: N250, N260, and N279. 7 N-linked (GlcNAc...) asparagine glycosylation sites follow: N327, N374, N478, N491, N512, N523, and N528. Residues N355–R409 form the LRRCT domain. 3 disulfide bridges follow: C359–C382, C361–C407, and C432–C483. One can recognise an Ig-like C2-type domain in the interval P397 to A496. A helical transmembrane segment spans residues T548–W568. Residues S569 to I606 lie on the Cytoplasmic side of the membrane.

It localises to the cell membrane. May play a role in regulating axonal regeneration and plasticity in the adult central nervous system. In Xenopus tropicalis (Western clawed frog), this protein is Leucine-rich repeat and immunoglobulin-like domain-containing nogo receptor-interacting protein 1 (lingo1).